Reading from the N-terminus, the 186-residue chain is MILVDWQIMDRISRGQIKVEPFEPGLIQPNSLDIRLGDHFVWYVPGDRVIDPYDKESVTAEVEEMNANEVILYPGQFMLAETKEVLSLPDNVVASIEGKSSIARLGIELHQTGGWIDAGFIGSITLEMCNVNQRPVKMYAGMPIGQLVFYTTERAEQPYNLKQDAKYQGQRQATLSRYHENQRFIQ.

Residues 99-104 (KSSIAR), Asp117, 125-127 (TLE), Gln146, Tyr159, Lys166, and Gln170 contribute to the dCTP site. The Proton donor/acceptor role is filled by Glu127.

This sequence belongs to the dCTP deaminase family. Homotrimer.

It carries out the reaction dCTP + 2 H2O = dUMP + NH4(+) + diphosphate. Its pathway is pyrimidine metabolism; dUMP biosynthesis; dUMP from dCTP: step 1/1. Bifunctional enzyme that catalyzes both the deamination of dCTP to dUTP and the hydrolysis of dUTP to dUMP without releasing the toxic dUTP intermediate. The polypeptide is dCTP deaminase, dUMP-forming (Methanosphaerula palustris (strain ATCC BAA-1556 / DSM 19958 / E1-9c)).